A 186-amino-acid polypeptide reads, in one-letter code: GPI-anchored hemophore ARB_02741 (186 aa).

Positions 1–18 (MKFSQAVIALAAATVVSA) are cleaved as a signal peptide. The CFEM domain occupies 19 to 108 (QLPDVPQCSL…SSKPSEPSTS (90 aa)). Cystine bridges form between Cys26/Cys67, Cys30/Cys62, Cys40/Cys48, and Cys50/Cys83. Residue Asp45 coordinates heme. The tract at residues 89–159 (PVSIPPVEES…NTGVPTQSTP (71 aa)) is disordered. Residues 96 to 131 (EESSSKPSEPSTSEAPTASPTESTPAPTTPAPTGTG) are compositionally biased toward low complexity. Positions 132 to 144 (SPSGTGAPGGPSG) are enriched in gly residues. A compositionally biased stretch (polar residues) spans 148–159 (FTNTGVPTQSTP). Gly163 carries GPI-anchor amidated glycine lipidation. Residues 164–186 (AASGLSANIGGMGAAILAIAAYL) constitute a propeptide, removed in mature form.

This sequence belongs to the RBT5 family. The GPI-anchor is attached to the protein in the endoplasmic reticulum and serves to target the protein to the cell surface. There, the glucosamine-inositol phospholipid moiety is cleaved off and the GPI-modified mannoprotein is covalently attached via its lipidless GPI glycan remnant to the 1,6-beta-glucan of the outer cell wall layer.

The protein resides in the secreted. Its subcellular location is the cell wall. It localises to the cell membrane. Functionally, GPI-anchored cell wall protein involved in stabilizing the cell wall. The protein is GPI-anchored hemophore ARB_02741 of Arthroderma benhamiae (strain ATCC MYA-4681 / CBS 112371) (Trichophyton mentagrophytes).